A 232-amino-acid polypeptide reads, in one-letter code: 6-phosphogluconolactonase (232 aa).

This sequence belongs to the glucosamine/galactosamine-6-phosphate isomerase family. 6-phosphogluconolactonase subfamily.

It carries out the reaction 6-phospho-D-glucono-1,5-lactone + H2O = 6-phospho-D-gluconate + H(+). The protein operates within carbohydrate degradation; pentose phosphate pathway; D-ribulose 5-phosphate from D-glucose 6-phosphate (oxidative stage): step 2/3. In terms of biological role, hydrolysis of 6-phosphogluconolactone to 6-phosphogluconate. The chain is 6-phosphogluconolactonase (pgl) from Rhizobium meliloti (strain 1021) (Ensifer meliloti).